A 367-amino-acid chain; its full sequence is MIKKNKKVIIAMSGGVDSSVSAWFLKNENYQVEGLFMKNWEEDDEKEYCNAAKDLSDAEEVCKKLNIHLHKVNFSKEYWEKVFENFLNEHKKGKTPNPDILCNKEIKFKIFFNYAIQELQSDYIATGHYAQIKKKNGKYFLLKAVDLNKDQSYFLYTLKGIQLKNILFPIGGLKKSQVRIIAKKIGLKVAEKKDSTGICFIGPKKINNFLNRYIKAEKGDIITTEGTIVGKHNGLFCYTLGQRKGLGIGGIKGNYNIPWYVIEKNIINNTLIIAQGSCNKRLMSIGLIAEKINWINDDKIIFPFSCQAKIRYRQIDIFCNIKYINDFLIKVLFDSPVSSVTPGQSIVFYSSKICLGGGVIQSRLPLL.

Residues 11 to 18 (AMSGGVDS) and Met37 contribute to the ATP site. The tract at residues 97–99 (NPD) is interaction with target base in tRNA. Cys102 functions as the Nucleophile in the catalytic mechanism. The cysteines at positions 102 and 199 are disulfide-linked. Gly127 is an ATP binding site. An interaction with tRNA region spans residues 149-151 (KDQ). Cys199 functions as the Cysteine persulfide intermediate in the catalytic mechanism. Residues 311-312 (RY) form an interaction with tRNA region.

This sequence belongs to the MnmA/TRMU family. In terms of assembly, interacts with TusE.

The protein localises to the cytoplasm. It carries out the reaction S-sulfanyl-L-cysteinyl-[protein] + uridine(34) in tRNA + AH2 + ATP = 2-thiouridine(34) in tRNA + L-cysteinyl-[protein] + A + AMP + diphosphate + H(+). Functionally, catalyzes the 2-thiolation of uridine at the wobble position (U34) of tRNA(Lys), tRNA(Glu) and tRNA(Gln), leading to the formation of s(2)U34, the first step of tRNA-mnm(5)s(2)U34 synthesis. Sulfur is provided by IscS, via a sulfur-relay system. Binds ATP and its substrate tRNAs. In Buchnera aphidicola subsp. Schizaphis graminum (strain Sg), this protein is tRNA-specific 2-thiouridylase MnmA.